The chain runs to 105 residues: Synaptic plasticity regulator PANTS (105 aa).

The protein belongs to the UPF0545 family. As to quaternary structure, interacts with RTN4 isoform A/Nogo-A; the interaction results in enhanced RTN4-mediated inhibition of AMPA receptor clustering. Also interacts with NCAM1, RANBP2 and CCT8. In terms of processing, rapidly degraded by proteolysis following neuronal stimulation, resulting in increased AMPA receptor clustering. In the postnatal brain, expressed diffusely throughout the hippocampus at a low level at 8 weeks (at protein level). At 16 weeks, strongly expressed in the stratum lucidum of the hippocampus (at protein level). In developing and aging brain, expression is strongest in hippocampus, especially in areas CA3 and CA2, throughout the dorsoventral axis.

It is found in the synapse. It localises to the synaptic cleft. Its function is as follows. Negatively regulates long-term potentiation and modulates adult synaptic plasticity. Stabilizes the interaction of RTN4 isoform A/Nogo-A with its receptors, inhibiting clustering of postsynaptic AMPA receptors at synaptic sites. Upon neuronal stimulation, degraded at synapses, reducing RTN4 signaling and allowing AMPA receptor clustering at individual synapses. The sequence is that of Synaptic plasticity regulator PANTS from Mus musculus (Mouse).